The sequence spans 371 residues: Ribosomal RNA small subunit methyltransferase H (371 aa).

S-adenosyl-L-methionine-binding positions include 92–94 (GGH), aspartate 111, tyrosine 138, aspartate 159, and glutamine 166.

It belongs to the methyltransferase superfamily. RsmH family.

The protein localises to the cytoplasm. It carries out the reaction cytidine(1402) in 16S rRNA + S-adenosyl-L-methionine = N(4)-methylcytidine(1402) in 16S rRNA + S-adenosyl-L-homocysteine + H(+). Its function is as follows. Specifically methylates the N4 position of cytidine in position 1402 (C1402) of 16S rRNA. This chain is Ribosomal RNA small subunit methyltransferase H, found in Mycolicibacterium gilvum (strain PYR-GCK) (Mycobacterium gilvum (strain PYR-GCK)).